Reading from the N-terminus, the 1598-residue chain is Mushroom body large-type Kenyon cell-specific protein 1 (1598 aa).

Disordered stretches follow at residues 83–105, 140–387, 436–462, and 495–525; these read PGNL…SLPA, RHHH…SDGI, PHDD…PMSV, and PLVG…SQDN. The span at 140-151 shows a compositional bias: basic residues; sequence RHHHLQNHHHHL. Residues 164-174 are compositionally biased toward low complexity; it reads QQQQQQQQRQQ. Basic and acidic residues predominate over residues 175-191; sequence QRQEERRLRPDEIKVEV. Residues 210–263 are compositionally biased toward low complexity; that stretch reads STDASTPATVTTTGATTTLPAASATGTGPATPSAVVATSNATAAMTTGTTTIPT. Acidic residues predominate over residues 275–291; the sequence is EGADDRDDDEENEEEED. Composition is skewed to basic and acidic residues over residues 292-305, 315-324, and 335-346; these read GRGQ…LKLD, LRREKDRGSR, and DGTKERTEEVAL. Ser-444 is modified (phosphoserine; by MAPK). A compositionally biased stretch (low complexity) spans 445–461; it reads PQSDSSSSSRSAESPMS. Positions 582–634 constitute an HTH psq-type 1 domain; the sequence is VGAGGGRRAYTEEELQAALRDIQSGKLGTRRAAVIYGIPRSTLRNKVYKLAME. Residues 610-630 constitute a DNA-binding region (H-T-H motif); the sequence is TRRAAVIYGIPRSTLRNKVYK. Disordered stretches follow at residues 636–705, 797–877, 962–1045, 1082–1145, 1248–1283, and 1301–1598; these read ERDA…SGAE, RLSK…DSAQ, GQTV…NYDR, ERHL…NGIK, ETSA…NGSF, and RAMT…SVEQ. A compositionally biased stretch (low complexity) spans 653 to 687; that stretch reads APATTITTITTTTTTTTTTTTTTTTPNTTQNASAT. Residues 694-705 are compositionally biased toward acidic residues; it reads DEVDDKELSGAE. Residues 820–855 show a composition bias toward low complexity; the sequence is THPQAQAQAQPQQQQQQQQQQPQQQQQQQQQQQQQQ. The segment covering 965-975 has biased composition (gly residues); that stretch reads VSGGGMGGCQP. Residues 1003–1021 show a composition bias toward low complexity; sequence ANAQQGQAQAQAKPQSQEA. Positions 1034-1086 constitute an HTH psq-type 2 domain; the sequence is RPKRGKYRNYDRDSLVEAVRAVQRGEMSVHRAGSYYGVPHSTLEYKVKERHLM. The H-T-H motif DNA-binding region spans 1062-1082; that stretch reads VHRAGSYYGVPHSTLEYKVKE. Residues 1093 to 1102 show a composition bias toward basic and acidic residues; it reads QKQSDDKTKE. A compositionally biased stretch (low complexity) spans 1103–1120; that stretch reads TSTVTAAAAATNIRPGTA. Residues 1309–1318 show a composition bias toward low complexity; that stretch reads QQQQASSQQQ. Composition is skewed to basic and acidic residues over residues 1383 to 1392 and 1407 to 1442; these read DRGRNDDGSD and GSRD…DRKT. The segment covering 1447-1466 has biased composition (low complexity); sequence PQQPQQQQQQQQQQQQQQQQ. A compositionally biased stretch (basic and acidic residues) spans 1481–1497; the sequence is TDKKSACDSKLIVDHSS. Over residues 1501-1547 the composition is skewed to low complexity; that stretch reads QQQQPQQQQQQQQQQQPQQQSQQPQQQQPQPQQQQQQQQQQQPQQQQ. Residues 1562 to 1577 show a composition bias toward polar residues; the sequence is RGYNSGNNRSGEQANS.

In terms of assembly, homodimer. Large-type Kenyon cells of mushroom body.

The protein localises to the nucleus. In terms of biological role, transcriptional activator which binds to the consensus sequence 5'-CCCTATCGATCGATCTCTACCT-3'. May play a role in higher-order sensory processing. The polypeptide is Mushroom body large-type Kenyon cell-specific protein 1 (Mblk-1) (Apis mellifera (Honeybee)).